The chain runs to 551 residues: Cation/acetate symporter ActP (551 aa).

14 helical membrane-spanning segments follow: residues H5–G25, I34–A54, G77–V97, G104–E124, L150–A170, V184–A204, W207–V227, I263–L283, G304–V324, F356–L376, V406–E426, I430–I450, L469–L489, and Y498–I518.

The protein belongs to the sodium:solute symporter (SSF) (TC 2.A.21) family.

The protein localises to the cell inner membrane. Its function is as follows. Transports acetate. The sequence is that of Cation/acetate symporter ActP from Yersinia pestis bv. Antiqua (strain Antiqua).